The following is a 237-amino-acid chain: Ribonuclease PH (237 aa).

Residues arginine 86 and 124 to 126 (GTR) contribute to the phosphate site.

The protein belongs to the RNase PH family. Homohexameric ring arranged as a trimer of dimers.

It carries out the reaction tRNA(n+1) + phosphate = tRNA(n) + a ribonucleoside 5'-diphosphate. Its function is as follows. Phosphorolytic 3'-5' exoribonuclease that plays an important role in tRNA 3'-end maturation. Removes nucleotide residues following the 3'-CCA terminus of tRNAs; can also add nucleotides to the ends of RNA molecules by using nucleoside diphosphates as substrates, but this may not be physiologically important. Probably plays a role in initiation of 16S rRNA degradation (leading to ribosome degradation) during starvation. In Myxococcus xanthus (strain DK1622), this protein is Ribonuclease PH.